The sequence spans 215 residues: Large ribosomal subunit protein uL4 (215 aa).

The interval 46–72 is disordered; the sequence is TAKSKNRAEVSGGGRKPWAQKGGGRAR. Positions 56 to 71 are enriched in gly residues; sequence SGGGRKPWAQKGGGRA.

It belongs to the universal ribosomal protein uL4 family. Part of the 50S ribosomal subunit.

One of the primary rRNA binding proteins, this protein initially binds near the 5'-end of the 23S rRNA. It is important during the early stages of 50S assembly. It makes multiple contacts with different domains of the 23S rRNA in the assembled 50S subunit and ribosome. In terms of biological role, forms part of the polypeptide exit tunnel. The chain is Large ribosomal subunit protein uL4 from Helicobacter pylori (strain ATCC 700392 / 26695) (Campylobacter pylori).